A 342-amino-acid polypeptide reads, in one-letter code: UDP-glucuronic acid decarboxylase 3 (342 aa).

Polar residues predominate over residues 1 to 11; the sequence is MAATSEKQNTT. The interval 1 to 22 is disordered; sequence MAATSEKQNTTKPPPSPSPLRN. 61 to 86 is a binding site for NAD(+); that stretch reads DNYFTGSKENLKKWIGHPRFELIRHD. Arginine 170 contributes to the substrate binding site. Tyrosine 173 serves as the catalytic Proton acceptor. 173–177 contributes to the NAD(+) binding site; the sequence is YDEGK. Substrate is bound at residue asparagine 202. Residue arginine 214 coordinates NAD(+). Residues 215-219, 232-239, and 299-303 each bind substrate; these read VVSNF, QKPGTQTR, and DPRQR.

The protein belongs to the NAD(P)-dependent epimerase/dehydratase family. UDP-glucuronic acid decarboxylase subfamily. The cofactor is NAD(+). In terms of tissue distribution, ubiquitous.

It localises to the cytoplasm. It carries out the reaction UDP-alpha-D-glucuronate + H(+) = UDP-alpha-D-xylose + CO2. It functions in the pathway nucleotide-sugar biosynthesis; UDP-alpha-D-xylose biosynthesis; UDP-alpha-D-xylose from UDP-alpha-D-glucuronate: step 1/1. Functionally, catalyzes the NAD-dependent decarboxylation of UDP-glucuronic acid to UDP-xylose. Necessary for the biosynthesis of the core tetrasaccharide in glycosaminoglycan biosynthesis. The chain is UDP-glucuronic acid decarboxylase 3 (UXS3) from Arabidopsis thaliana (Mouse-ear cress).